A 502-amino-acid polypeptide reads, in one-letter code: MASPELASHHSDPSDGEGAPFLPGVDDESPESLNSDIPFQKHSNHGLIIKLFVIYLAIGMGGPMIQSPLTRIVESIACRNYWNAHDPSQLPGPEQISEGMCKIPEVQREVTTIIGYREFFNAFLTSTFALPYGLLADRYGRKLAIRLASVGFVFNSVLSFAPIWLPNIFPLRTMWFGAVGWVLGGGPVLLFALFWSMIADATADSERDTVILRFGIATVSAGFLANVTSSFVMKFDSRVPLMTGCGLLFAGLLVANLLPETLRKKSPETTISADTSVSLTSLFFRIKKTIWSYRFICYNYPVAVILPAFFVTQLAGGSAFLVQYISIRFHRTIADATLLVALQHAFTIPVLFFILPQISERLRAYISRLQSDLLLARISVMLLALGLFGIGLSSSINTLIPSLLLHAGGAGFVLIARGLITGLARREETARLYTLIEATQSIGEVTASLYITNSLNWGLGRGGLWIGLPWLIVSFLLALIALVLGILRLPPRSENASSGSTH.

The tract at residues 1-38 is disordered; that stretch reads MASPELASHHSDPSDGEGAPFLPGVDDESPESLNSDIP. Helical transmembrane passes span 45–65, 114–136, 150–170, 175–195, 214–234, 239–259, 302–322, 336–356, 380–400, 403–423, and 464–484; these read HGLI…GPMI, IGYR…GLLA, VGFV…NIFP, WFGA…ALFW, FGIA…FVMK, VPLM…NLLP, VAVI…AFLV, ATLL…FILP, VMLL…NTLI, LLLH…ITGL, and LWIG…ALVL. An N-linked (GlcNAc...) asparagine glycan is attached at Asn495.

This sequence belongs to the major facilitator superfamily.

Its subcellular location is the cell membrane. In terms of biological role, MFS-rype transporer; part of the gene cluster that mediates the biosynthesis of the asperipin-2a, a bicyclic peptide that possesses two macrocyclic ether rings consisting of 14- and 17-membered paracyclophans. AprT is likely to be involved in the cellular export of asperipin-2a. In Aspergillus flavus (strain ATCC 200026 / FGSC A1120 / IAM 13836 / NRRL 3357 / JCM 12722 / SRRC 167), this protein is MFS-type transporeter aprT.